The sequence spans 778 residues: MPAFLGLKCLGKLCSSEKSKVTSSERTSARGSNRKRLIVEDRRVSGTSFTAHRRATITHLLYLCPKDYCPRGRVCNSVDPFVAHPQDPHHPSEKPVIHCHKCGEPCKGEVLRVQTKHFHIKCFTCKVCGCDLAQGGFFIKNGEYLCTLDYQRMYGTRCHGCGEFVEGEVVTALGKTYHPNCFACTICKRPFPPGDRVTFNGRDCLCQLCAQPMSSSPKETTFSSNCAGCGRDIKNGQALLALDKQWHLGCFKCKSCGKVLTGEYISKDGAPYCEKDYQGLFGVKCEACHQFITGKVLEAGDKHYHPSCARCSRCNQMFTEGEEMYLQGSTVWHPDCKQSTKTEEKLRPTRTSSESIYSRPGSSIPGSPGHTIYAKVDNEILDYKDLAAIPKVKAIYDIERPDLITYEPFYTSGYDDKQERQSLGESPRTLSPTPSAEGYQDVRDRMIHRSTSQGSINSPVYSRHSYTPTTSRSPQHFHRPGNEPSSGRNSPLPYRPDSRPLTPTYAQAPKHFHVPDQGINIYRKPPIYKQHAALAAQSKSSEDIIKFSKFPAAQAPDPSETPKIETDHWPGPPSFAVVGPDMKRRSSGREEDDEELLRRRQLQEEQLMKLNSGLGQLILKEEMEKESRERSSLLASRYDSPINSASHIPSSKTASLPGYGRNGLHRPVSTDFAQYNSYGDVSGGVRDYQTLPDGHMPAMRMDRGVSMPNMLEPKIFPYEMLMVTNRGRNKILREVDRTRLERHLAPEVFREIFGMSIQEFDRLPLWRRNDMKKKAKLF.

LIM zinc-binding domains lie at 97 to 156 (IHCH…MYGT), 156 to 216 (TRCH…MSSS), 224 to 283 (SNCA…LFGV), and 283 to 343 (VKCE…TKTE). Ser-216 is modified (phosphoserine). The segment at 339-370 (STKTEEKLRPTRTSSESIYSRPGSSIPGSPGH) is disordered. Residues 360 to 369 (PGSSIPGSPG) are compositionally biased toward low complexity. Ser-367 carries the post-translational modification Phosphoserine. Phosphotyrosine occurs at positions 373 and 396. Disordered stretches follow at residues 414 to 510 (YDDK…QAPK) and 552 to 597 (AAQA…EELL). Phosphoserine is present on residues Ser-422, Ser-426, and Ser-431. Residues 423 to 434 (LGESPRTLSPTP) show a composition bias toward polar residues. Thr-433 is subject to Phosphothreonine. Ser-435 bears the Phosphoserine mark. The residue at position 439 (Tyr-439) is a Phosphotyrosine. Residues 449-474 (RSTSQGSINSPVYSRHSYTPTTSRSP) are compositionally biased toward polar residues. 5 positions are modified to phosphoserine: Ser-452, Ser-455, Ser-458, Ser-498, and Ser-587. The stretch at 590–614 (EEDDEELLRRRQLQEEQLMKLNSGL) forms a coiled coil. A Glycyl lysine isopeptide (Lys-Gly) (interchain with G-Cter in SUMO2) cross-link involves residue Lys-620. Ser-640, Ser-655, Ser-677, and Ser-706 each carry phosphoserine. The 69-residue stretch at 710-778 (MLEPKIFPYE…NDMKKKAKLF (69 aa)) folds into the HP domain.

In terms of assembly, binds F-actin. Interacts with ABRA. As to expression, detected in liver, heart, skeletal muscle, brain and retina, where it is concentrated in the inner segment and in the outer plexiform layers.

It is found in the cytoplasm. The protein localises to the cytoskeleton. May act as scaffold protein. May play a role in the development of the retina. Has been suggested to play a role in axon guidance. The polypeptide is Actin-binding LIM protein 1 (ABLIM1) (Homo sapiens (Human)).